The chain runs to 166 residues: S-phase kinase-associated protein 1 homolog (166 aa).

The tract at residues 105–166 (ILAANYLDIK…ENKWAEEATS (62 aa)) is interaction with the F-box domain of F-box proteins.

This sequence belongs to the SKP1 family. In terms of assembly, component of multiple SCF (SKP1-CUL1-F-box) E3 ubiquitin-protein ligase complexes formed of CUL1, SKP1, RBX1 and a variable F-box domain-containing protein as substrate-specific subunit.

It participates in protein modification; protein ubiquitination. Functionally, essential component of the SCF (SKP1-CUL1-F-box protein) ubiquitin ligase complex, which mediates the ubiquitination of proteins involved in cell cycle progression, signal transduction and transcription. In the SCF complex, serves as an adapter that links the F-box protein to CUL1. The functional specificity of the SCF complex depends on the F-box protein as substrate recognition component. Its association with the holoenzyme telomerase ribonucleoprotein complex suggests that it may play a role in turnover of holoenzyme telomerase complex components. In Tetrahymena thermophila (strain SB210), this protein is S-phase kinase-associated protein 1 homolog.